Here is a 69-residue protein sequence, read N- to C-terminus: Conotoxin Lt5.7 (69 aa).

A signal peptide spans 1-19; the sequence is MLCLPVFIILLLLASPAAP. A propeptide spanning residues 20–54 is cleaved from the precursor; the sequence is KSLETRIQNDLIRAGLTDADLKTEKGFLSGLLNVA.

It belongs to the conotoxin T superfamily. In terms of processing, contains 2 disulfide bonds that can be either 'C1-C3, C2-C4' or 'C1-C4, C2-C3', since these disulfide connectivities have been observed for conotoxins with cysteine framework V (for examples, see AC P0DQQ7 and AC P81755). In terms of tissue distribution, expressed by the venom duct.

It localises to the secreted. The protein is Conotoxin Lt5.7 of Conus litteratus (Lettered cone).